Reading from the N-terminus, the 227-residue chain is Phosphatidylserine decarboxylase proenzyme (227 aa).

Residue Ser184 is the Schiff-base intermediate with substrate; via pyruvic acid of the active site. Position 184 is a pyruvic acid (Ser); by autocatalysis (Ser184).

Belongs to the phosphatidylserine decarboxylase family. PSD-A subfamily. Heterodimer of a large membrane-associated beta subunit and a small pyruvoyl-containing alpha subunit. Pyruvate is required as a cofactor. In terms of processing, is synthesized initially as an inactive proenzyme. Formation of the active enzyme involves a self-maturation process in which the active site pyruvoyl group is generated from an internal serine residue via an autocatalytic post-translational modification. Two non-identical subunits are generated from the proenzyme in this reaction, and the pyruvate is formed at the N-terminus of the alpha chain, which is derived from the carboxyl end of the proenzyme. The post-translation cleavage follows an unusual pathway, termed non-hydrolytic serinolysis, in which the side chain hydroxyl group of the serine supplies its oxygen atom to form the C-terminus of the beta chain, while the remainder of the serine residue undergoes an oxidative deamination to produce ammonia and the pyruvoyl prosthetic group on the alpha chain.

The protein localises to the cell membrane. The catalysed reaction is a 1,2-diacyl-sn-glycero-3-phospho-L-serine + H(+) = a 1,2-diacyl-sn-glycero-3-phosphoethanolamine + CO2. It participates in phospholipid metabolism; phosphatidylethanolamine biosynthesis; phosphatidylethanolamine from CDP-diacylglycerol: step 2/2. Catalyzes the formation of phosphatidylethanolamine (PtdEtn) from phosphatidylserine (PtdSer). This chain is Phosphatidylserine decarboxylase proenzyme, found in Ehrlichia ruminantium (strain Welgevonden).